A 64-amino-acid polypeptide reads, in one-letter code: Large ribosomal subunit protein uL29 (64 aa).

Belongs to the universal ribosomal protein uL29 family.

The chain is Large ribosomal subunit protein uL29 from Nitrosomonas europaea (strain ATCC 19718 / CIP 103999 / KCTC 2705 / NBRC 14298).